We begin with the raw amino-acid sequence, 330 residues long: Polyprenal reductase (330 aa).

At 1–19 (MASWVGTELSALNPLRTLW) the chain is on the cytoplasmic side. Residues 20 to 40 (LALAAAFLLALLLQLAPAGLL) form a helical membrane-spanning segment. At 41–74 (PNCALFQDLIRYGKTKLSGPRRPAVCRAFDVPKR) the chain is on the lumenal side. A helical transmembrane segment spans residues 75 to 95 (YFSHFYVVSVLWNGFLLWFLS). Over 96 to 132 (RSLFLGAPFPNWLRALLRTLGSTQFRALEMESKASQM) the chain is Cytoplasmic. Residues 133 to 153 (LVGELALSAFLVLVFLWVHSV) form a helical membrane-spanning segment. The Lumenal segment spans residues 154 to 168 (RRLFECFYISVFSNA). Residues 169–189 (VMHVVQYCFGLVYYVLVGLTV) form a helical membrane-spanning segment. Residues 190–206 (LSQVPMDDKNVYMLGKN) lie on the Cytoplasmic side of the membrane. The helical transmembrane segment at 207–227 (LLLPARWFHVLGMMMFLWSSA) threads the bilayer. The Lumenal portion of the chain corresponds to 228–277 (HQYECHVILSNLRRNKKGAIVHCQHRIPFGDWFEYVSSANYLAELMIYIS). A helical membrane pass occupies residues 278–298 (MAVTFGFHNFTWWLVVAYVFF). The Cytoplasmic portion of the chain corresponds to 299–330 (CQALSAFFNHKFYKSTFVSYPKHRKAFLPFLF).

Belongs to the steroid 5-alpha reductase family. Polyprenal reductase subfamily.

It is found in the endoplasmic reticulum membrane. It catalyses the reaction a di-trans,poly-cis-dolichal + NADP(+) = a di-trans,poly-cis-polyprenal + NADPH + H(+). The enzyme catalyses a 3-oxo-5alpha-steroid + NADP(+) = a 3-oxo-Delta(4)-steroid + NADPH + H(+). The catalysed reaction is androst-4-ene-3,17-dione + NADPH + H(+) = 5alpha-androstan-3,17-dione + NADP(+). It carries out the reaction 17beta-hydroxy-5alpha-androstan-3-one + NADP(+) = testosterone + NADPH + H(+). It participates in protein modification; protein glycosylation. Functionally, plays a key role in early steps of protein N-linked glycosylation by being involved in the conversion of polyprenol into dolichol. Acts as a polyprenal reductase that mediates the reduction of polyprenal into dolichal in a NADP-dependent mechanism. Dolichols are required for the synthesis of dolichol-linked monosaccharides and the oligosaccharide precursor used for N-glycosylation. Also able to convert testosterone (T) into 5-alpha-dihydrotestosterone (DHT). The protein is Polyprenal reductase of Mesocricetus auratus (Golden hamster).